The following is a 209-amino-acid chain: Octanoyltransferase (209 aa).

Residues 30–209 (DHEPEIIYLV…IQTEFNKIFK (180 aa)) form the BPL/LPL catalytic domain. Substrate is bound by residues 69-76 (RGGKFTFH), 143-145 (AIG), and 156-158 (GVA). Residue C174 is the Acyl-thioester intermediate of the active site.

Belongs to the LipB family.

Its subcellular location is the cytoplasm. It carries out the reaction octanoyl-[ACP] + L-lysyl-[protein] = N(6)-octanoyl-L-lysyl-[protein] + holo-[ACP] + H(+). It participates in protein modification; protein lipoylation via endogenous pathway; protein N(6)-(lipoyl)lysine from octanoyl-[acyl-carrier-protein]: step 1/2. Functionally, catalyzes the transfer of endogenously produced octanoic acid from octanoyl-acyl-carrier-protein onto the lipoyl domains of lipoate-dependent enzymes. Lipoyl-ACP can also act as a substrate although octanoyl-ACP is likely to be the physiological substrate. The protein is Octanoyltransferase of Rickettsia africae (strain ESF-5).